We begin with the raw amino-acid sequence, 936 residues long: Isoleucine--tRNA ligase (936 aa).

A 'HIGH' region motif is present at residues 58–68 (PYANGNIHIGH). E560 is an L-isoleucyl-5'-AMP binding site. The 'KMSKS' region signature appears at 601–605 (KMSKS). K604 contributes to the ATP binding site. Residues C899, C902, C919, and C922 each coordinate Zn(2+).

It belongs to the class-I aminoacyl-tRNA synthetase family. IleS type 1 subfamily. As to quaternary structure, monomer. Requires Zn(2+) as cofactor.

The protein resides in the cytoplasm. It catalyses the reaction tRNA(Ile) + L-isoleucine + ATP = L-isoleucyl-tRNA(Ile) + AMP + diphosphate. In terms of biological role, catalyzes the attachment of isoleucine to tRNA(Ile). As IleRS can inadvertently accommodate and process structurally similar amino acids such as valine, to avoid such errors it has two additional distinct tRNA(Ile)-dependent editing activities. One activity is designated as 'pretransfer' editing and involves the hydrolysis of activated Val-AMP. The other activity is designated 'posttransfer' editing and involves deacylation of mischarged Val-tRNA(Ile). In Proteus mirabilis (strain HI4320), this protein is Isoleucine--tRNA ligase.